Here is a 338-residue protein sequence, read N- to C-terminus: MSRRETPTSTISSTPTGTRTPRRRLSRKGHPVRRSPLIAKNSIFTVFDLSFEILINAVEENSLDIIKNYLRGDSFHQTAKWGLNVPPKTDFQGDTLLIKAAKKGKFLIAKALLEAGAYKEIVNKLGETALICAVRHFRVETLDLLIQYHADVKIKYKGQNLLELTLEKYSEKTKNFTLRIVQSLVAAGVELWHSDGSQIMASDKEIDEIIRNARNLQIIKKEKREAEERARTKKSKQITLQRIQRDLEYISKRLPFEENILTTPDFPQLFFEISKLVEIISDSQKENKEEFAEASISLIDALKNFGMILEKRDVPGEVKKEDTTLSRNNSLSCLSSPR.

Residues 1–31 (MSRRETPTSTISSTPTGTRTPRRRLSRKGHP) form a disordered region. Over residues 7-19 (PTSTISSTPTGTR) the composition is skewed to low complexity. Residues 20–31 (TPRRRLSRKGHP) show a composition bias toward basic residues. ANK repeat units lie at residues 92–124 (QGDTLLIKAAKKGKFLIAKALLEAGAYKEIVNK) and 125–157 (LGETALICAVRHFRVETLDLLIQYHADVKIKYK). A coiled-coil region spans residues 197-242 (SQIMASDKEIDEIIRNARNLQIIKKEKREAEERARTKKSKQITLQR). Positions 319 to 338 (KKEDTTLSRNNSLSCLSSPR) are disordered. Low complexity predominate over residues 325–338 (LSRNNSLSCLSSPR).

This chain is Putative ankyrin repeat protein CBU_0781, found in Coxiella burnetii (strain RSA 493 / Nine Mile phase I).